A 289-amino-acid chain; its full sequence is Enoyl-CoA delta isomerase 1, mitochondrial (289 aa).

A mitochondrion-targeting transit peptide spans 1-28; it reads MALAAARRVLLQAGSRLGRRGAVDGARR. Position 48 is an N6-acetyllysine; alternate (Lys48). Lys48 carries the N6-succinyllysine; alternate modification. An N6-succinyllysine modification is found at Lys71. At Lys76 the chain carries N6-acetyllysine. Substrate is bound by residues 93-97, Gly140, and Asn164; that span reads AGLDL. N6-acetyllysine; alternate is present on residues Lys222, Lys229, and Lys255. N6-succinyllysine; alternate is present on residues Lys222, Lys229, and Lys255. At Lys275 the chain carries N6-succinyllysine. Lys283 bears the N6-acetyllysine; alternate mark. Residue Lys283 is modified to N6-succinyllysine; alternate.

Belongs to the enoyl-CoA hydratase/isomerase family. As to quaternary structure, homotrimer.

The protein resides in the mitochondrion matrix. The catalysed reaction is a (3Z)-enoyl-CoA = a 4-saturated (2E)-enoyl-CoA. It catalyses the reaction a (3E)-enoyl-CoA = a 4-saturated (2E)-enoyl-CoA. The enzyme catalyses (3Z)-octenoyl-CoA = (2E)-octenoyl-CoA. It carries out the reaction (2E)-tetradecenoyl-CoA = (3Z)-tetradecenoyl-CoA. The catalysed reaction is (3Z)-dodecenoyl-CoA = (2E)-dodecenoyl-CoA. It catalyses the reaction (3Z)-hexenoyl-CoA = (2E)-hexenoyl-CoA. The enzyme catalyses (3Z)-decenoyl-CoA = (2E)-decenoyl-CoA. It functions in the pathway lipid metabolism; fatty acid beta-oxidation. Functionally, key enzyme of fatty acid beta-oxidation. Able to isomerize both 3-cis (3Z) and 3-trans (3E) double bonds into the 2-trans (2E) form in a range of enoyl-CoA species, with a preference for (3Z)-enoyl-CoAs over (3E)-enoyl-CoAs. The catalytic efficiency of this enzyme is not affected by the fatty acyl chain length. This Rattus norvegicus (Rat) protein is Enoyl-CoA delta isomerase 1, mitochondrial.